The sequence spans 345 residues: S-adenosylmethionine:tRNA ribosyltransferase-isomerase (345 aa).

It belongs to the QueA family. In terms of assembly, monomer.

The protein resides in the cytoplasm. It carries out the reaction 7-aminomethyl-7-carbaguanosine(34) in tRNA + S-adenosyl-L-methionine = epoxyqueuosine(34) in tRNA + adenine + L-methionine + 2 H(+). It participates in tRNA modification; tRNA-queuosine biosynthesis. Transfers and isomerizes the ribose moiety from AdoMet to the 7-aminomethyl group of 7-deazaguanine (preQ1-tRNA) to give epoxyqueuosine (oQ-tRNA). The polypeptide is S-adenosylmethionine:tRNA ribosyltransferase-isomerase (Helicobacter pylori (strain J99 / ATCC 700824) (Campylobacter pylori J99)).